The chain runs to 516 residues: uncharacterized protein (516 aa).

Serine 21 is subject to Phosphoserine. Residues 46-74 (DLQSSMEDSNKANGNGEETTDGAEGVLQT) are disordered. Polar residues predominate over residues 47 to 62 (LQSSMEDSNKANGNGE). WD repeat units lie at residues 182-227 (TFPL…AVYP), 252-292 (YHTD…CVKS), 295-335 (YHSD…APSS), 337-377 (QVTS…KSVW), 381-421 (AHDG…PKMV), and 426-468 (LDVG…GVRK). Residues 482–493 (ERIVQLEDRGAG) are compositionally biased toward basic and acidic residues. The interval 482–516 (ERIVQLEDRGAGEDSSDDDDYEDIEDDDDQDAEMS) is disordered. Positions 495–516 (DSSDDDDYEDIEDDDDQDAEMS) are enriched in acidic residues. 2 positions are modified to phosphoserine: serine 496 and serine 497.

Its subcellular location is the cytoplasm. The protein localises to the nucleus. It is found in the nucleolus. This is an uncharacterized protein from Schizosaccharomyces pombe (strain 972 / ATCC 24843) (Fission yeast).